Reading from the N-terminus, the 486-residue chain is Recombining binding protein suppressor of hairless (486 aa).

2 DNA-binding regions span residues 43–53 (QKSYGNEKRFF) and 151–156 (SKPSKK). At K161 the chain carries N6-acetyllysine. Residues 178 to 183 (RLRSQT) form a DNA-binding region. Residues 341–431 (PVVESLQLNG…YSTSLTFTYT (91 aa)) form the IPT/TIG domain. A compositionally biased stretch (polar residues) spans 451–467 (SSQVPPNESNTNSEGSY). The interval 451–486 (SSQVPPNESNTNSEGSYTNASTNSTSVTSSTATVVS) is disordered. A compositionally biased stretch (low complexity) spans 468–486 (TNASTNSTSVTSSTATVVS).

It belongs to the Su(H) family. In terms of assembly, interacts with activated NOTCH1, NOTCH2 or NOTCH3. Interacts with MINT/SHARP. This interaction may mediate the recruitment of large corepressor complexes containing proteins such as HDAC1, HDAC2, NCOR2, SAP30, FHL1/KYOT2 and CIR1. Interacts with EP300, MAML1 and PTF1A. Interacts with RITA1, leading to nuclear export, prevent the interaction between RBPJ and NICD product and subsequent down-regulation of the Notch signaling pathway. Interacts with SNW1. Interacts with CHCHD2 and CXXC5. Interacts with BEND6 (via BEN domain). Interacts with NKAPL. Interacts with ZMIZ1. Interacts with RBM15. Interacts with L3MBTL3 and KDM1A; the interaction with KDM1A is weaker in the absence of L3MBTL3 and the interaction with L3MBTL3 is impaired by Notch-derived peptides containing the intracellular domain (NICD).

It localises to the nucleus. Its subcellular location is the cytoplasm. Its function is as follows. Transcriptional regulator that plays a central role in Notch signaling, a signaling pathway involved in cell-cell communication that regulates a broad spectrum of cell-fate determinations. Acts as a transcriptional repressor when it is not associated with Notch proteins. When associated with some NICD product of Notch proteins (Notch intracellular domain), it acts as a transcriptional activator that activates transcription of Notch target genes. Probably represses or activates transcription via the recruitment of chromatin remodeling complexes containing histone deacetylase or histone acetylase proteins, respectively. Specifically binds to the immunoglobulin kappa-type J segment recombination signal sequence. Binds specifically to methylated DNA. Binds to the oxygen responsive element of COX4I2 and activates its transcription under hypoxia conditions (4% oxygen). Negatively regulates the phagocyte oxidative burst in response to bacterial infection by repressing transcription of NADPH oxidase subunits. The protein is Recombining binding protein suppressor of hairless (RBPJ) of Pongo abelii (Sumatran orangutan).